Consider the following 29-residue polypeptide: Cytochrome b6-f complex subunit 8 (29 aa).

Residues 3–23 form a helical membrane-spanning segment; sequence IVSLAWAALMVVFSFSLSLVV.

The protein belongs to the PetN family. The 4 large subunits of the cytochrome b6-f complex are cytochrome b6, subunit IV (17 kDa polypeptide, PetD), cytochrome f and the Rieske protein, while the 4 small subunits are PetG, PetL, PetM and PetN. The complex functions as a dimer.

It localises to the plastid. Its subcellular location is the chloroplast thylakoid membrane. Component of the cytochrome b6-f complex, which mediates electron transfer between photosystem II (PSII) and photosystem I (PSI), cyclic electron flow around PSI, and state transitions. This chain is Cytochrome b6-f complex subunit 8, found in Glycine max (Soybean).